The chain runs to 378 residues: Spermatogenic leucine zipper protein 1 (378 aa).

The disordered stretch occupies residues 1–31; the sequence is MSDTDNSAEMPARCPSPNPAPGAKQEPPNSG. Phosphoserine is present on S106. The interaction with PPP1CC isoform gamma-2 stretch occupies residues 116–122; that stretch reads KNKIRFK. Residues 116 to 127 form a helix-loop-helix motif region; that stretch reads KNKIRFKDDLFI. The interval 128–193 is basic motif; it reads HFDPEREQNT…HLRGEYRKLR (66 aa). A coiled-coil region spans residues 182–233; it reads SLHLRGEYRKLRNNMEQLLQEADHWSKQHNELSELMRSYQECQNETQETTDK. S207 is modified (phosphoserine). The leucine-zipper stretch occupies residues 252 to 273; the sequence is LEEQVKKLSHDTHALHLIAALL.

Interacts with PPP1CC isoform gamma-2. This interaction can prevent SPZ1 binding to the E-box and inhibits PPP1CC activity. Post-translationally, phosphorylated by MAPK1/ERK2 and MAPK3/ERK1. In terms of tissue distribution, expressed specifically in the testis and epidydimis. In the testis expressed in both germ cells and somatic cells (Sertoli and Leydig cells). Expressed in several tumor cell lines.

It is found in the cytoplasm. It localises to the nucleus. Functionally, transcription factor that binds to the DNA sequence 5'-CANNTG-3'(E box) and the G-box motif. Directly binds to a guanine-rich region of the PCNA promoter and up-regulates its expression which in turn induces cell transformation and tumor formation. May play an important role in the regulation of cell proliferation and differentiation during spermatogenesis. In Mus musculus (Mouse), this protein is Spermatogenic leucine zipper protein 1 (Spz1).